The chain runs to 382 residues: MTKPSSKASRKPVTKSGRNSKRSRSGSSKGDAQVARAINNQKPGLHPRNLHRDGYDFDKLTKVSPVLTPYVQPNPYGNLSIDFADPQAVKALNAAILKLDYQIDNWDIPEGFLCPPIPGRVDYLHYIYDLLAGVEEFENKSETEMEGQNVPPVNSHTIKPKKMKIKALDIGTGANAIYPLLGIQTYGWRFVASDVDPISLANVKAIVEGNNCLLGKLEVRLQNDHQKVFSGIIKPDDRFDITLCNPPFHASLKEASEGSQRKLKNLAENRASKGHKLEPKAPKDKSQLNFGGQKAELWCEGGEKQFLHNMICESKVFATQCLWFTSLVSKKENLEACYTELKRVGAITVKTIDMAQGNKLTRVLAWSFLTPSQRGLWAKYRS.

2 disordered regions span residues 1-53 (MTKP…LHRD) and 269-288 (NRAS…KSQL). Over residues 8–24 (ASRKPVTKSGRNSKRSR) the composition is skewed to basic residues. Basic and acidic residues predominate over residues 269–286 (NRASKGHKLEPKAPKDKS).

Belongs to the methyltransferase superfamily. METTL16/RlmF family.

The protein resides in the cytoplasm. It carries out the reaction adenosine(1618) in 23S rRNA + S-adenosyl-L-methionine = N(6)-methyladenosine(1618) in 23S rRNA + S-adenosyl-L-homocysteine + H(+). In terms of biological role, specifically methylates the adenine in position 1618 of 23S rRNA. This chain is Ribosomal RNA large subunit methyltransferase F, found in Shewanella woodyi (strain ATCC 51908 / MS32).